The sequence spans 118 residues: Ribonuclease P protein component (118 aa).

Belongs to the RnpA family. In terms of assembly, consists of a catalytic RNA component (M1 or rnpB) and a protein subunit.

The enzyme catalyses Endonucleolytic cleavage of RNA, removing 5'-extranucleotides from tRNA precursor.. In terms of biological role, RNaseP catalyzes the removal of the 5'-leader sequence from pre-tRNA to produce the mature 5'-terminus. It can also cleave other RNA substrates such as 4.5S RNA. The protein component plays an auxiliary but essential role in vivo by binding to the 5'-leader sequence and broadening the substrate specificity of the ribozyme. This Shewanella denitrificans (strain OS217 / ATCC BAA-1090 / DSM 15013) protein is Ribonuclease P protein component.